A 1282-amino-acid polypeptide reads, in one-letter code: Clustered mitochondria protein homolog (1282 aa).

Residues 1 to 50 (MADASQATTPAAEGNPVPEVPETQTPPADVNGTTEQEQTEEGAEQALEDQ) are disordered. Over residues 16 to 36 (PVPEVPETQTPPADVNGTTEQ) the composition is skewed to low complexity. Positions 37-47 (EQTEEGAEQAL) are enriched in acidic residues. Residues 331-575 (DNTRSQETYL…RITPLDIAWM (245 aa)) enclose the Clu domain. Residues 623–650 (EEKKEGEEATEEAKTEEIKTEEAEKSEE) are a coiled coil. Basic and acidic residues-rich tracts occupy residues 624 to 661 (EKKE…KTEE) and 668 to 680 (VAEK…AKED). Disordered regions lie at residues 624 to 680 (EKKE…AKED) and 913 to 945 (PVAE…TSPV). 3 TPR repeats span residues 1021–1054 (AQMY…AERT), 1063–1096 (VLNY…WKVI), and 1105–1138 (ITTM…CNKV). Residues 1257-1282 (VENSEKKKGGKKSKGPSNPKKRGGKA) form a disordered region. Residues 1264 to 1282 (KGGKKSKGPSNPKKRGGKA) are compositionally biased toward basic residues.

The protein belongs to the CLU family. May associate with the eukaryotic translation initiation factor 3 (eIF-3) complex.

Its subcellular location is the cytoplasm. Functionally, mRNA-binding protein involved in proper cytoplasmic distribution of mitochondria. The chain is Clustered mitochondria protein homolog from Neurospora crassa (strain ATCC 24698 / 74-OR23-1A / CBS 708.71 / DSM 1257 / FGSC 987).